The following is a 709-amino-acid chain: DNA topoisomerase 1 (709 aa).

Residues 3–127 form the Toprim domain; sequence KNLVVIESPN…KCKRITFNEI (125 aa). Mg(2+)-binding residues include E9 and D95. A Topo IA-type catalytic domain is found at 143–598; the sequence is DLNWVESQFA…FWTNFKSDVK (456 aa). Residues 176 to 181 form an interaction with DNA region; sequence SAGRVQ. Y334 serves as the catalytic O-(5'-phospho-DNA)-tyrosine intermediate. C4-type zinc fingers lie at residues 618–646 and 667–696; these read CPKC…FPKC and CPEC…FPNC.

It belongs to the type IA topoisomerase family. Monomer. The cofactor is Mg(2+).

It carries out the reaction ATP-independent breakage of single-stranded DNA, followed by passage and rejoining.. In terms of biological role, releases the supercoiling and torsional tension of DNA, which is introduced during the DNA replication and transcription, by transiently cleaving and rejoining one strand of the DNA duplex. Introduces a single-strand break via transesterification at a target site in duplex DNA. The scissile phosphodiester is attacked by the catalytic tyrosine of the enzyme, resulting in the formation of a DNA-(5'-phosphotyrosyl)-enzyme intermediate and the expulsion of a 3'-OH DNA strand. The free DNA strand then undergoes passage around the unbroken strand, thus removing DNA supercoils. Finally, in the religation step, the DNA 3'-OH attacks the covalent intermediate to expel the active-site tyrosine and restore the DNA phosphodiester backbone. The polypeptide is DNA topoisomerase 1 (Mycoplasma genitalium (strain ATCC 33530 / DSM 19775 / NCTC 10195 / G37) (Mycoplasmoides genitalium)).